Here is a 608-residue protein sequence, read N- to C-terminus: Serine/arginine repetitive matrix protein 4 (608 aa).

Disordered regions lie at residues 34–246 (ASIT…PLPR) and 261–608 (SAAD…STRR). The span at 78 to 100 (GREKACRELDPARAHSASQDRDP) shows a compositional bias: basic and acidic residues. 2 stretches are compositionally biased toward basic residues: residues 107–123 (RGKKKKKKSTRKKRRRS) and 131–187 (VKKK…HRCP). Over residues 188–200 (SRSQSSELRSPSC) the composition is skewed to low complexity. Residues 201-213 (ESRHRGRSPEEGR) are compositionally biased toward basic and acidic residues. A compositionally biased stretch (basic residues) spans 214-228 (KSRRTHSRRCSKNHC). The segment covering 289 to 299 (TSSPPSTQTSS) has biased composition (low complexity). Positions 322 to 339 (CGNTSDSGNSFTTSSPQN) are enriched in polar residues. Composition is skewed to low complexity over residues 389–420 (RSSSYTSTRSSSPSSRSPNPRASPRYTRSRST) and 428–459 (SRSPSYSSKSGKRSPPSRSSRSRRSPSYSRYS). The segment covering 460–477 (PSRERDLKYGEKEPQPRE) has biased composition (basic and acidic residues). Residues 478–494 (RARRRRRSYSPMRKRRR) are compositionally biased toward basic residues. Over residues 495 to 504 (DSPSHLEARR) the composition is skewed to basic and acidic residues. Positions 518–555 (PSPSSSSSLSSASSWYSSSSSSSSSSSRSPSRSYSRSR) are enriched in low complexity. Over residues 556 to 573 (SPSRSHSSRSQTRSRTRT) the composition is skewed to basic residues. Over residues 574 to 608 (SRSSSSRSLSLGSRSRSRNRSLSYSSAESYASTRR) the composition is skewed to low complexity.

It belongs to the nSR100 family. Phosphorylated. In terms of tissue distribution, specifically expressed in neuronal cells (at protein level). Expressed in adult nervous system and sensory organ tissues.

The protein resides in the nucleus. Splicing factor specifically required for neural cell differentiation. Acts in conjunction with nPTB/PTBP2 by binding directly to its regulated target transcripts and promotes neural-specific exon inclusion in many genes that function in neural cell differentiation. Required to promote the inclusion of neural-specific exon 10 in nPTB/PTBP2, leading to increased expression of neural-specific nPTB/PTBP2. Also promotes the inclusion of exon 16 in DAAM1 in neuron extracts. Promotes alternative splicing of REST transcripts to produce REST isoform 2 (REST4) with greatly reduced repressive activity, thereby activating expression of REST targets in neural cells. Plays an important role during embryonic development as well as in the proper functioning of the adult nervous system. Regulates alternative splicing events in genes with important neuronal functions. The chain is Serine/arginine repetitive matrix protein 4 (Srrm4) from Mus musculus (Mouse).